A 449-amino-acid polypeptide reads, in one-letter code: Exodeoxyribonuclease 7 large subunit (449 aa).

The protein belongs to the XseA family. In terms of assembly, heterooligomer composed of large and small subunits.

The protein localises to the cytoplasm. The catalysed reaction is Exonucleolytic cleavage in either 5'- to 3'- or 3'- to 5'-direction to yield nucleoside 5'-phosphates.. Functionally, bidirectionally degrades single-stranded DNA into large acid-insoluble oligonucleotides, which are then degraded further into small acid-soluble oligonucleotides. The polypeptide is Exodeoxyribonuclease 7 large subunit (Latilactobacillus sakei subsp. sakei (strain 23K) (Lactobacillus sakei subsp. sakei)).